The following is a 128-amino-acid chain: Centrosomal protein 15 (128 aa).

It is found in the cell projection. The protein resides in the cilium. In terms of biological role, may play a role in ciliary assembly. This Bos taurus (Bovine) protein is Centrosomal protein 15 (CEP15).